The sequence spans 179 residues: Large ribosomal subunit protein bL17 (179 aa).

Positions 123–179 are disordered; sequence RTRGTDTLPDTVTDTGPDSAPDPVPGSEPGSAAGDLPDADTAPADPGESSSNQRVIR. Residues 154–168 show a composition bias toward low complexity; the sequence is AAGDLPDADTAPADP. Over residues 170–179 the composition is skewed to polar residues; the sequence is ESSSNQRVIR.

The protein belongs to the bacterial ribosomal protein bL17 family. As to quaternary structure, part of the 50S ribosomal subunit. Contacts protein L32.

The chain is Large ribosomal subunit protein bL17 from Tropheryma whipplei (strain Twist) (Whipple's bacillus).